We begin with the raw amino-acid sequence, 70 residues long: Large ribosomal subunit protein bL31 (70 aa).

Residues Cys16, Cys18, Cys37, and Cys40 each contribute to the Zn(2+) site.

This sequence belongs to the bacterial ribosomal protein bL31 family. Type A subfamily. As to quaternary structure, part of the 50S ribosomal subunit. Zn(2+) is required as a cofactor.

Binds the 23S rRNA. The sequence is that of Large ribosomal subunit protein bL31 from Actinobacillus pleuropneumoniae serotype 5b (strain L20).